The sequence spans 592 residues: Beta-fructofuranosidase, insoluble isoenzyme 2 (592 aa).

The first 40 residues, 1-40, serve as a signal peptide directing secretion; sequence MLIRCFHIKMALVTCFHSMLFLSAVVFIFSLDVNIRGVEA. The active site involves Asp75. 5 N-linked (GlcNAc...) asparagine glycosylation sites follow: Asn171, Asn195, Asn310, Asn347, and Asn568.

This sequence belongs to the glycosyl hydrolase 32 family.

The protein localises to the secreted. Its subcellular location is the cell wall. The catalysed reaction is Hydrolysis of terminal non-reducing beta-D-fructofuranoside residues in beta-D-fructofuranosides.. May play an important role in phloem unloading and in stress response. This Daucus carota (Wild carrot) protein is Beta-fructofuranosidase, insoluble isoenzyme 2 (INV2).